Here is a 434-residue protein sequence, read N- to C-terminus: 3-phosphoshikimate 1-carboxyvinyltransferase (434 aa).

Residues K22, S23, and R27 each contribute to the 3-phosphoshikimate site. K22 provides a ligand contact to phosphoenolpyruvate. G93 and R121 together coordinate phosphoenolpyruvate. 3-phosphoshikimate is bound by residues S168, S169, Q170, S199, D320, and K347. Q170 is a phosphoenolpyruvate binding site. The active-site Proton acceptor is D320. Positions 351, 394, and 419 each coordinate phosphoenolpyruvate.

It belongs to the EPSP synthase family. As to quaternary structure, monomer.

It is found in the cytoplasm. The catalysed reaction is 3-phosphoshikimate + phosphoenolpyruvate = 5-O-(1-carboxyvinyl)-3-phosphoshikimate + phosphate. Its pathway is metabolic intermediate biosynthesis; chorismate biosynthesis; chorismate from D-erythrose 4-phosphate and phosphoenolpyruvate: step 6/7. Its function is as follows. Catalyzes the transfer of the enolpyruvyl moiety of phosphoenolpyruvate (PEP) to the 5-hydroxyl of shikimate-3-phosphate (S3P) to produce enolpyruvyl shikimate-3-phosphate and inorganic phosphate. In Burkholderia cenocepacia (strain ATCC BAA-245 / DSM 16553 / LMG 16656 / NCTC 13227 / J2315 / CF5610) (Burkholderia cepacia (strain J2315)), this protein is 3-phosphoshikimate 1-carboxyvinyltransferase.